Here is a 220-residue protein sequence, read N- to C-terminus: Superoxide dismutase [Cu-Zn], chloroplastic (220 aa).

The transit peptide at 1 to 66 (MAAHCILFSS…AAPKPLTVFA (66 aa)) directs the protein to the chloroplast. Histidine 112, histidine 114, and histidine 129 together coordinate Cu cation. Cysteine 123 and cysteine 212 are disulfide-bonded. Zn(2+) contacts are provided by histidine 129, histidine 137, histidine 146, and aspartate 149. Histidine 186 is a Cu cation binding site.

The protein belongs to the Cu-Zn superoxide dismutase family. As to quaternary structure, homotetramer. Cu cation serves as cofactor. It depends on Zn(2+) as a cofactor.

The protein resides in the plastid. Its subcellular location is the chloroplast. It catalyses the reaction 2 superoxide + 2 H(+) = H2O2 + O2. Its function is as follows. Destroys radicals which are normally produced within the cells and which are toxic to biological systems. This chain is Superoxide dismutase [Cu-Zn], chloroplastic (SODCP), found in Solidago canadensis var. scabra (Tall goldenrod).